A 480-amino-acid chain; its full sequence is Cysteine--tRNA ligase (480 aa).

Cys31 is a binding site for Zn(2+). Residues 33–43 carry the 'HIGH' region motif; sequence PTVYDSSHIGH. 3 residues coordinate Zn(2+): Cys211, His236, and Glu240. The 'KMSKS' region motif lies at 269–273; it reads KMSKS. Lys272 is a binding site for ATP.

It belongs to the class-I aminoacyl-tRNA synthetase family. Zn(2+) is required as a cofactor.

The catalysed reaction is tRNA(Cys) + L-cysteine + ATP = L-cysteinyl-tRNA(Cys) + AMP + diphosphate. In Encephalitozoon cuniculi (strain GB-M1) (Microsporidian parasite), this protein is Cysteine--tRNA ligase.